We begin with the raw amino-acid sequence, 175 residues long: Protein FLOWERING LOCUS T (175 aa).

Belongs to the phosphatidylethanolamine-binding protein family. As to quaternary structure, interacts with FD/BZIP14 and FDP/BZIP27. Interacts with FTIP1/MCTP1 in phloem companion cells. Interacts with NAKR1. As to expression, mostly localized in leaves vasculature.

The protein localises to the cytoplasm. It localises to the nucleus. Its subcellular location is the endoplasmic reticulum. Functionally, component of the mobile flower-promoting signal (floral stimulus or florigen). Promotes the transition from vegetative growth to flowering. Required for 'SEPALLATA3' (SEP3) and 'FRUITFULL' (FUL) accumulation in mature rosette leaves. Seems to acts in parallel with 'LEAFY' to induce flowering by regulating 'APETALA1'. Translated in leaves and then transported to the shoot apical meristem where it activates the transcription of several floral meristem identity genes. May play a role in both the autonomous and the long-day flowering pathways. This is Protein FLOWERING LOCUS T from Arabidopsis thaliana (Mouse-ear cress).